The primary structure comprises 1382 residues: MLRKLTIEQINDWFTIGKTVTNVELLGAPPAFPAGAAREEVQRQDVAPGAGPAAQAPALAQAPARPAAAFERSLSQRSSEVEYINKYRQLEAQELDVCRSVQPTSGPGPRPSLAKLSSVTCIPGTTYKYPDLPISRYKEEVVSLIESNSVVIIHGATGSGKSTQLPQYILDHYVQRSAYCSIVVTQPRKIGASSIARWISKERAWTLGGVVGYQVGLEKIATEDTRLIYMTTGVLLQKIVSAKSLMEFTHIIIDEVHERTEEMDFLLLVVRKLLRTNSRFVKVVLMSATISCKEFADYFAVPVQNKMNPAYIFEVEGKPHSVEEYYLNDLEHIHHSKLSPHLLEEPVITKDIYEVAVSLIQMFDDLDMKESGNKAWSGAQFVLERSSVLVFLPGLGEINYMHELLTSLVHKRLQVYPLHSSVALEEQNNVFLSPVPGYRKIILSTNIAESSVTVPDVKYVIDFCLTRTLVCDEDTNYQSLRLSWASKTSCNQRKGRAGRVSRGYCYRLVHKDFWDNSIPDHVVPEMLRCPLGSTILKVKLLDMGEPRALLATALSPPGLSDIERTILLLKEVGALAVSGQREDENPHDGELTFLGRVLAQLPVNQQLGKLIVLGHVFGCLDECLIIAAALSLKNFFAMPFRQHLDGYRNKVNFSGSSKSDCIALVEAFKTWKACRQTGELRYPKDELNWGRLNYIQIKRIREVAELYEELKTRISQFNMHVDSRRPVMDQEYIYKQRFILQVVLAGAFYPNYFTFGQPDEEMAVRELAGKDPKTTVVLKHIPPYGFLYYKQLQSLFRQCGQVKSIVFDGAKAFVEFSRNPTERFKTLPAVYMAIKMSQLKVSLELSVHSAEEIEGKVQGMNVSKLRNTRVNVDFQKQTVDPMQVSFNTSDRSQTVTDLLLTIDVTEVVEVGHFWGYRIDENNSEILKKLTAEINQLTLVPLPTHPHPDLVCLAPFADFDKQRYFRAQVLYVSGNSAEVFFVDYGNKSHVDLHLLMEIPCQFLELPFQALEFKICKMRPSAKSLVCGKHWSDGASQWFASLVSGCTLLVKVFSVVHSVLHVDVYQYSGVQDAINIRDVLIQQGYAELTEESYESKQSHEVLKGLFSKSVENMTDGSVPFPMKDDEKYLIRILLESFSTNKLGTPNCKAELHGPFNPYELKCHSLTRISKFRCVWIEKESINSVIISDAPEDLHQRMLVAASLSINATGSTMLLRETSLMPHIPGLPALLSMLFAPVIELRIDQNGKYYTGVLCGLGWNPATGASILPEHDMELAFDVQFSVEDVVEVNILRAAINKLVCDGPNGCKCLGPERVAQLQDIARQKLLGLFCQSKPREKIVPKWHEKPYEWNQVDPKLVMEQADRESSRGKNTFLYQLHKLVVLGT.

Residues 36 to 62 (AAREEVQRQDVAPGAGPAAQAPALAQA) are disordered. Residues 47 to 62 (APGAGPAAQAPALAQA) show a composition bias toward low complexity. The 167-residue stretch at 142-308 (VSLIESNSVV…FAVPVQNKMN (167 aa)) folds into the Helicase ATP-binding domain. 155 to 162 (GATGSGKS) contacts ATP. The short motif at 254–257 (DEVH) is the DEAH box element. One can recognise a Helicase C-terminal domain in the interval 377-544 (SGAQFVLERS…ILKVKLLDMG (168 aa)). The region spanning 944 to 1004 (HPHPDLVCLA…MEIPCQFLEL (61 aa)) is the Tudor domain.

It belongs to the DEAD box helicase family. DEAH subfamily. Interacts with piRNA-associated proteins PIWIL1 and PIWIL4.

The protein localises to the cytoplasm. It localises to the nucleus. It carries out the reaction ATP + H2O = ADP + phosphate + H(+). Functionally, ATP-binding RNA helicase required during spermatogenesis. Required to repress transposable elements and prevent their mobilization, which is essential for the germline integrity. Acts via the piRNA metabolic process, which mediates the repression of transposable elements during meiosis by forming complexes composed of piRNAs and Piwi proteins and governs the methylation and subsequent repression of transposons. Acts downstream of piRNA biogenesis: exclusively required for transposon silencing in the nucleus, suggesting that it acts as a nuclear effector in the nucleus together with PIWIL4. The protein is ATP-dependent RNA helicase TDRD9 of Homo sapiens (Human).